We begin with the raw amino-acid sequence, 445 residues long: Glutamate--tRNA ligase 1 (445 aa).

The 'HIGH' region motif lies at 8-18 (PSPTGKLHVGN). A 'KMSKS' region motif is present at residues 239–243 (KLSKR). K242 is a binding site for ATP.

The protein belongs to the class-I aminoacyl-tRNA synthetase family. Glutamate--tRNA ligase type 1 subfamily. In terms of assembly, monomer.

The protein localises to the cytoplasm. The catalysed reaction is tRNA(Glu) + L-glutamate + ATP = L-glutamyl-tRNA(Glu) + AMP + diphosphate. Its function is as follows. Catalyzes the attachment of glutamate to tRNA(Glu) in a two-step reaction: glutamate is first activated by ATP to form Glu-AMP and then transferred to the acceptor end of tRNA(Glu). The polypeptide is Glutamate--tRNA ligase 1 (Maricaulis maris (strain MCS10) (Caulobacter maris)).